A 183-amino-acid polypeptide reads, in one-letter code: Protein Syd (183 aa).

This sequence belongs to the Syd family.

The protein localises to the cell inner membrane. Its function is as follows. Interacts with the SecY protein in vivo. May bind preferentially to an uncomplexed state of SecY, thus functioning either as a chelating agent for excess SecY in the cell or as a regulatory factor that negatively controls the translocase function. The sequence is that of Protein Syd from Yersinia enterocolitica serotype O:8 / biotype 1B (strain NCTC 13174 / 8081).